The following is a 404-amino-acid chain: tRNA-specific 2-thiouridylase MnmA (404 aa).

Residues 42–49 (GLSGGVDS) and Leu-68 contribute to the ATP site. Cys-129 functions as the Nucleophile in the catalytic mechanism. A disulfide bridge links Cys-129 with Cys-239. Gly-154 provides a ligand contact to ATP. Residues 189–191 (KDQ) form an interaction with tRNA region. Cys-239 (cysteine persulfide intermediate) is an active-site residue. The tract at residues 344–345 (RY) is interaction with tRNA.

It belongs to the MnmA/TRMU family.

It is found in the cytoplasm. The catalysed reaction is S-sulfanyl-L-cysteinyl-[protein] + uridine(34) in tRNA + AH2 + ATP = 2-thiouridine(34) in tRNA + L-cysteinyl-[protein] + A + AMP + diphosphate + H(+). Catalyzes the 2-thiolation of uridine at the wobble position (U34) of tRNA, leading to the formation of s(2)U34. The sequence is that of tRNA-specific 2-thiouridylase MnmA from Prochlorococcus marinus (strain NATL1A).